We begin with the raw amino-acid sequence, 1144 residues long: Ribonucleoside-diphosphate reductase large subunit (1144 aa).

A disordered region spans residues 1-33; the sequence is MANRPAASALAGARSPSERQEPREPEVAPPGGD. Residues 16–26 are compositionally biased toward basic and acidic residues; that stretch reads PSERQEPREPE. An RIP homotypic interaction motif (RHIM) motif is present at residues 55-75; that stretch reads AYRISDSSFVQCGSNCSMIID. The tract at residues 118–324 is disordered; that stretch reads SGPSATTSVG…TDPGYPVPLE (207 aa). Over residues 119–132 the composition is skewed to polar residues; sequence GPSATTSVGTQTSG. Pro residues predominate over residues 141–159; it reads TPEPQGPQAVPPPPPPPFP. Over residues 164–179 the composition is skewed to basic and acidic residues; sequence CCARRDARGGAEKDVG. The span at 192 to 204 shows a compositional bias: acidic residues; sequence SETEDSDSSDEDT. 2 stretches are compositionally biased toward low complexity: residues 205–216 and 279–305; these read GSGSETLSRSSS and GSAT…DVAP. Substrate is bound by residues Thr573, 588-589, Gly619, 798-802, and 975-979; these read SC, NLCTE, and PTAAS. Cysteines 589 and 815 form a disulfide. The active-site Proton acceptor is the Asn798. The active-site Cysteine radical intermediate is the Cys800. The active-site Proton acceptor is Glu802.

It belongs to the ribonucleoside diphosphate reductase large chain family. In terms of assembly, heterotetramer composed of a homodimer of the large subunit (R1) and a homodimer of the small subunit (R2). Larger multisubunit protein complex are also active, composed of (R1)n(R2)n. May self-assemble (via RIP homotypic interaction motif/RHIM) into homomeric fibrillar amyloid structures. Interacts (via RHIM) with human RIPK1 (via RHIM). Interacts (via RHIM) with human RIPK3 (via RHIM). May interact (via RHIM) with human ZBP1 (via RHIM). Interacts (via C-terminus) with host CASP8.

It carries out the reaction a 2'-deoxyribonucleoside 5'-diphosphate + [thioredoxin]-disulfide + H2O = a ribonucleoside 5'-diphosphate + [thioredoxin]-dithiol. Functionally, ribonucleoside-diphosphate reductase holoenzyme that provides the precursors necessary for viral DNA synthesis. Allows virus growth in non-dividing cells, as well as reactivation from latency in infected hosts. Catalyzes the biosynthesis of deoxyribonucleotides from the corresponding ribonucleotides. The N-terminal region confers antiapoptotic activity in differentiated cells such as neurons and is important for viral reactivation to increase neural survivability. Prevents host necroptosis by targeting host RIPK1 and RIPK3, thereby hampering the formation of necroptotic RIPK1-RIPK3 complexes. May form hetero-amyloid structures with host proteins RIPK3 or ZBP1, thereby preventing RIPK3- and ZBP1-mediated necroptosis. In addition, inhibits extrinsic apoptosis by targeting host CASP8. This Homo sapiens (Human) protein is Ribonucleoside-diphosphate reductase large subunit.